Consider the following 361-residue polypeptide: Glyceraldehyde-3-phosphate dehydrogenase, glycosomal (361 aa).

NAD(+) contacts are provided by residues 13–14 (RI), D39, Q92, and S135. D-glyceraldehyde 3-phosphate-binding positions include 166 to 168 (SCT), T198, 227 to 228 (TG), and R250. C167 acts as the Nucleophile in catalysis. N336 contacts NAD(+). Positions 359 to 361 (SKM) match the Microbody targeting signal motif.

It belongs to the glyceraldehyde-3-phosphate dehydrogenase family. In terms of assembly, homotetramer.

It localises to the glycosome. It carries out the reaction D-glyceraldehyde 3-phosphate + phosphate + NAD(+) = (2R)-3-phospho-glyceroyl phosphate + NADH + H(+). It participates in carbohydrate degradation; glycolysis; pyruvate from D-glyceraldehyde 3-phosphate: step 1/5. This is Glyceraldehyde-3-phosphate dehydrogenase, glycosomal (GAPG) from Leishmania mexicana.